We begin with the raw amino-acid sequence, 256 residues long: Undecaprenyl-diphosphatase (256 aa).

The next 7 helical transmembrane spans lie at 8–28 (VLGI…GHLI), 41–61 (FVKS…VVLY), 75–95 (IIAA…LIKG), 96–116 (FLIG…IILI), 175–195 (AEFS…YDLI), 208–228 (ILII…KWFL), and 236–256 (LKIF…FFLF).

This sequence belongs to the UppP family.

It is found in the cell inner membrane. It carries out the reaction di-trans,octa-cis-undecaprenyl diphosphate + H2O = di-trans,octa-cis-undecaprenyl phosphate + phosphate + H(+). Catalyzes the dephosphorylation of undecaprenyl diphosphate (UPP). Confers resistance to bacitracin. The polypeptide is Undecaprenyl-diphosphatase (Aquifex aeolicus (strain VF5)).